Consider the following 249-residue polypeptide: Probable transcriptional regulatory protein CYB_1350 (249 aa).

It belongs to the TACO1 family.

The protein resides in the cytoplasm. This Synechococcus sp. (strain JA-2-3B'a(2-13)) (Cyanobacteria bacterium Yellowstone B-Prime) protein is Probable transcriptional regulatory protein CYB_1350.